The sequence spans 538 residues: Sterile alpha motif domain-containing protein 1 (538 aa).

The span at 1-11 shows a compositional bias: pro residues; that stretch reads MAGPPALPPPE. Disordered stretches follow at residues 1-30 and 92-247; these read MAGP…ASPH and SYRN…GAAR. Residues 12–29 show a composition bias toward low complexity; it reads TAAAATTAAAASSSAASP. In terms of domain architecture, SAMD1-like winged helix (WH) spans 23-99; the sequence is SSSAASPHYQ…SISYRNAARV (77 aa). Threonine 107 is modified (phosphothreonine). Residues 115–125 are compositionally biased toward low complexity; sequence PRGAPAAAAAA. Positions 126 to 139 are enriched in pro residues; that stretch reads APPPTPAPPPPPAP. Over residues 140-158 the composition is skewed to low complexity; it reads VAAAAPARAPRAAAAAATA. Position 161 is a phosphoserine (serine 161). The segment covering 168–177 has biased composition (low complexity); it reads GPRAQRAAPL. Residues 178-236 show a composition bias toward pro residues; the sequence is AAPPPAPAAPPAVAPPAGPRRAPPPAVAAREPPLPPPPQPPAPPQQQQPPPPQPQPPPE. The span at 237–247 shows a compositional bias: low complexity; sequence GGAVRAGGAAR. Serine 261 is subject to Phosphoserine. A compositionally biased stretch (basic and acidic residues) spans 282–291; it reads AARGRLERTR. Residues 282-458 are disordered; that stretch reads AARGRLERTR…PPGRKEKPSD (177 aa). Over residues 328–351 the composition is skewed to acidic residues; that stretch reads KEEEEDDDEDEDEEDDVSEGSEVP. The span at 425–436 shows a compositional bias: pro residues; it reads SPSPVPLPPGKP. The region spanning 462-530 is the SAM domain; it reads WTVMDVVEYF…KVLQQGHFED (69 aa).

As to quaternary structure, homopolymerize into a closed pentameric ring. Interacts (via SAM domain) with L3MBTL3 (via SAM domain); the interaction mediates L3MBTL3 binding to chromatin. Interacts (via WH domain) with KDM1A; the interaction modulates KDM1A function. In terms of tissue distribution, expressed in atherosclerotic lesions, not in normal intima. Expressed in foam cells.

It is found in the nucleus. Its subcellular location is the chromosome. It localises to the secreted. Its function is as follows. Unmethylated CpG islands (CGIs)-binding protein which localizes to H3K4me3-decorated CGIs, where it acts as a transcriptional repressor. Tethers L3MBTL3 to chromatin and interacts with the KDM1A histone demethylase complex to modulate H3K4me2 and H3K4me3 levels at CGIs. Plays a role in atherogenesis by binding with LDL on cell surface and promoting LDL oxidation which leads to the formation of foam cell. The sequence is that of Sterile alpha motif domain-containing protein 1 from Homo sapiens (Human).